A 344-amino-acid chain; its full sequence is tRNA N6-adenosine threonylcarbamoyltransferase (344 aa).

2 residues coordinate Fe cation: His-111 and His-115. Substrate is bound by residues 134-138 (LVSGG), Asp-167, Gly-180, and Asn-277. Residue Asp-305 coordinates Fe cation.

The protein belongs to the KAE1 / TsaD family. The cofactor is Fe(2+).

It localises to the cytoplasm. The enzyme catalyses L-threonylcarbamoyladenylate + adenosine(37) in tRNA = N(6)-L-threonylcarbamoyladenosine(37) in tRNA + AMP + H(+). Its function is as follows. Required for the formation of a threonylcarbamoyl group on adenosine at position 37 (t(6)A37) in tRNAs that read codons beginning with adenine. Is involved in the transfer of the threonylcarbamoyl moiety of threonylcarbamoyl-AMP (TC-AMP) to the N6 group of A37, together with TsaE and TsaB. TsaD likely plays a direct catalytic role in this reaction. This is tRNA N6-adenosine threonylcarbamoyltransferase from Glaesserella parasuis serovar 5 (strain SH0165) (Haemophilus parasuis).